A 23-amino-acid polypeptide reads, in one-letter code: Paralytic peptide 1 (23 aa).

Cys7 and Cys19 are disulfide-bonded.

This sequence belongs to the GBP/PSP1/paralytic peptide family. In terms of tissue distribution, hemolymph.

In terms of biological role, causes rapid, rigid paralysis when injected into Lepidopteran larvae. The physiological role may be to reduce hemolymph loss following injury and promote wound healing. The chain is Paralytic peptide 1 from Manduca sexta (Tobacco hawkmoth).